A 716-amino-acid chain; its full sequence is Translation initiation factor IF-2 (716 aa).

Residues 50-137 are disordered; sequence FKKSAKPAGN…KPKKELPEKI (88 aa). Residues 92 to 101 are compositionally biased toward low complexity; that stretch reads NNVQNTQFNN. Over residues 102–118 the composition is skewed to basic residues; that stretch reads KNKKKNNNNKKNKRGKN. Over residues 125-137 the composition is skewed to basic and acidic residues; sequence KQFKPKKELPEKI. The region spanning 217–386 is the tr-type G domain; the sequence is IRPPVVTIMG…LLVSEVEELK (170 aa). The tract at residues 226–233 is G1; that stretch reads GHVDHGKT. 226 to 233 provides a ligand contact to GTP; it reads GHVDHGKT. The segment at 251–255 is G2; that stretch reads GITQH. Residues 272–275 form a G3 region; sequence DTPG. Residues 272-276 and 326-329 each bind GTP; these read DTPGH and NKID. The tract at residues 326-329 is G4; sequence NKID. A G5 region spans residues 362–364; the sequence is SAL.

It belongs to the TRAFAC class translation factor GTPase superfamily. Classic translation factor GTPase family. IF-2 subfamily.

The protein localises to the cytoplasm. Its function is as follows. One of the essential components for the initiation of protein synthesis. Protects formylmethionyl-tRNA from spontaneous hydrolysis and promotes its binding to the 30S ribosomal subunits. Also involved in the hydrolysis of GTP during the formation of the 70S ribosomal complex. This Bacillus licheniformis (strain ATCC 14580 / DSM 13 / JCM 2505 / CCUG 7422 / NBRC 12200 / NCIMB 9375 / NCTC 10341 / NRRL NRS-1264 / Gibson 46) protein is Translation initiation factor IF-2.